The sequence spans 86 residues: Progonadoliberin-2 (86 aa).

The signal sequence occupies residues 1 to 24 (MVSVCRLLLVAALLLCLQAQLSFS). Gln-25 carries the pyrrolidone carboxylic acid modification. Gly-34 carries the post-translational modification Glycine amide.

This sequence belongs to the GnRH family.

Its subcellular location is the secreted. Stimulates the secretion of gonadotropins. In Clarias gariepinus (North African catfish), this protein is Progonadoliberin-2 (gnrh2).